The following is a 103-amino-acid chain: Endoribonuclease MazF3 (103 aa).

This sequence belongs to the PemK/MazF family. In terms of assembly, forms a complex with cognate antitoxin MazE3.

In terms of biological role, toxic component of a type II toxin-antitoxin (TA) system. Acts as an endoribonuclease, cleaving in U-rich regions. Neutralized by cognate antitoxin MazE3. In Mycobacterium tuberculosis (strain CDC 1551 / Oshkosh), this protein is Endoribonuclease MazF3 (mazF3).